Reading from the N-terminus, the 856-residue chain is DNA mismatch repair protein MutS (856 aa).

An ATP-binding site is contributed by 618–625 (GPNMGGKS).

The protein belongs to the DNA mismatch repair MutS family.

In terms of biological role, this protein is involved in the repair of mismatches in DNA. It is possible that it carries out the mismatch recognition step. This protein has a weak ATPase activity. This is DNA mismatch repair protein MutS from Shewanella baltica (strain OS195).